Reading from the N-terminus, the 257-residue chain is Ethanolamine ammonia-lyase small subunit (257 aa).

V153, E174, and C203 together coordinate adenosylcob(III)alamin.

Belongs to the EutC family. The basic unit is a heterodimer which dimerizes to form tetramers. The heterotetramers trimerize; 6 large subunits form a core ring with 6 small subunits projecting outwards. It depends on adenosylcob(III)alamin as a cofactor.

It is found in the bacterial microcompartment. The enzyme catalyses ethanolamine = acetaldehyde + NH4(+). Its pathway is amine and polyamine degradation; ethanolamine degradation. In terms of biological role, catalyzes the deamination of various vicinal amino-alcohols to oxo compounds. Allows this organism to utilize ethanolamine as the sole source of nitrogen and carbon in the presence of external vitamin B12. The chain is Ethanolamine ammonia-lyase small subunit from Rhodococcus erythropolis (Arthrobacter picolinophilus).